We begin with the raw amino-acid sequence, 678 residues long: THO complex subunit 5 homolog B (678 aa).

Disordered regions lie at residues 1 to 37 (MSSDSLKKRKPKVNRSEDGKRGRHDEQEGRYYSEEAE) and 294 to 329 (ALFKPPEDSQDDESDSDAEEEQTTKRRRPTLGVQLD). The Nuclear localization signal motif lies at 7–10 (KKRK). Over residues 14 to 37 (NRSEDGKRGRHDEQEGRYYSEEAE) the composition is skewed to basic and acidic residues. Positions 301-314 (DSQDDESDSDAEEE) are enriched in acidic residues.

Belongs to the THOC5 family. In terms of assembly, component of the THO subcomplex, which is composed of thoc1, thoc2, thoc3, thoc5, thoc6 and thoc7. Component of the transcription/export (TREX) complex at least composed of alyref/thoc4, ddx39b, sarnp/cip29, chtop and the THO subcomplex. Interacts with thoc7.

It is found in the nucleus. The protein resides in the nucleus speckle. The protein localises to the cytoplasm. Functionally, component of the THO subcomplex of the TREX complex which is thought to couple mRNA transcription, processing and nuclear export, and which specifically associates with spliced mRNA and not with unspliced pre-mRNA. Plays a key structural role in the oligomerization of the THO-ddx39b complex. TREX is recruited to spliced mRNAs by a transcription-independent mechanism, binds to mRNA upstream of the exon-junction complex (EJC) and is recruited in a splicing- and cap-dependent manner to a region near the 5' end of the mRNA where it functions in mRNA export to the cytoplasm via the TAP/NXF1 pathway. May be involved in cell differentiation. This Xenopus laevis (African clawed frog) protein is THO complex subunit 5 homolog B (thoc5-b).